The primary structure comprises 284 residues: Homeobox protein CDX-4 (284 aa).

2 disordered regions span residues 15–40 (PGTL…SPMP) and 120–155 (GGGT…SRHS). Positions 22–37 (GGDGTAGTGGTGGGGS) are enriched in gly residues. The homeobox DNA-binding region spans 173–232 (KEKYRVVYTDHQRLELEKEFHCNRYITIQRKSELAVNLGLSERQVKIWFQNRRAKERKMI). The segment covering 238-253 (QFENSGGSVQSDSDSI) has biased composition (polar residues). Positions 238 to 259 (QFENSGGSVQSDSDSISPGELP) are disordered.

This sequence belongs to the Caudal homeobox family.

It is found in the nucleus. The chain is Homeobox protein CDX-4 (CDX4) from Homo sapiens (Human).